Consider the following 241-residue polypeptide: Ribosomal RNA small subunit methyltransferase J (241 aa).

S-adenosyl-L-methionine is bound by residues 94-95 (RD) and Asp-163.

Belongs to the methyltransferase superfamily. RsmJ family.

It is found in the cytoplasm. The catalysed reaction is guanosine(1516) in 16S rRNA + S-adenosyl-L-methionine = N(2)-methylguanosine(1516) in 16S rRNA + S-adenosyl-L-homocysteine + H(+). Specifically methylates the guanosine in position 1516 of 16S rRNA. The protein is Ribosomal RNA small subunit methyltransferase J of Francisella tularensis subsp. novicida (strain U112).